The primary structure comprises 497 residues: Kynureninase (497 aa).

Positions Gly59–Asp86 are disordered. Residues Ala75–Asp86 show a composition bias toward polar residues. Residues Leu166, Thr167, Phe194–Asp197, Asp278, His281, and Tyr303 each bind pyridoxal 5'-phosphate. Lys304 carries the post-translational modification N6-(pyridoxal phosphate)lysine. Pyridoxal 5'-phosphate is bound by residues Trp337 and Asn365.

This sequence belongs to the kynureninase family. As to quaternary structure, homodimer. Requires pyridoxal 5'-phosphate as cofactor.

Its subcellular location is the cytoplasm. The enzyme catalyses L-kynurenine + H2O = anthranilate + L-alanine + H(+). It carries out the reaction 3-hydroxy-L-kynurenine + H2O = 3-hydroxyanthranilate + L-alanine + H(+). It functions in the pathway amino-acid degradation; L-kynurenine degradation; L-alanine and anthranilate from L-kynurenine: step 1/1. The protein operates within cofactor biosynthesis; NAD(+) biosynthesis; quinolinate from L-kynurenine: step 2/3. Functionally, catalyzes the cleavage of L-kynurenine (L-Kyn) and L-3-hydroxykynurenine (L-3OHKyn) into anthranilic acid (AA) and 3-hydroxyanthranilic acid (3-OHAA), respectively. This is Kynureninase from Pyricularia oryzae (strain 70-15 / ATCC MYA-4617 / FGSC 8958) (Rice blast fungus).